Reading from the N-terminus, the 334-residue chain is Beta-hexosaminidase (334 aa).

Substrate is bound by residues D60, R68, R133, and 163–164 (KH). H176 serves as the catalytic Proton donor/acceptor. D247 functions as the Nucleophile in the catalytic mechanism.

It belongs to the glycosyl hydrolase 3 family. NagZ subfamily.

Its subcellular location is the cytoplasm. It catalyses the reaction Hydrolysis of terminal non-reducing N-acetyl-D-hexosamine residues in N-acetyl-beta-D-hexosaminides.. It functions in the pathway cell wall biogenesis; peptidoglycan recycling. Plays a role in peptidoglycan recycling by cleaving the terminal beta-1,4-linked N-acetylglucosamine (GlcNAc) from peptide-linked peptidoglycan fragments, giving rise to free GlcNAc, anhydro-N-acetylmuramic acid and anhydro-N-acetylmuramic acid-linked peptides. The sequence is that of Beta-hexosaminidase from Xanthomonas oryzae pv. oryzae (strain KACC10331 / KXO85).